Consider the following 142-residue polypeptide: Hemoglobin subunit alpha-B (142 aa).

Residues 2 to 142 (VLSPTDKSNV…VSTVLTSKYR (141 aa)) form the Globin domain. O2 is bound at residue His59. Residue His88 participates in heme b binding.

This sequence belongs to the globin family. As to quaternary structure, heterotetramer of two alpha chains and two beta chains. In terms of tissue distribution, red blood cells.

Involved in oxygen transport from the lung to the various peripheral tissues. In Otolemur crassicaudatus (Brown greater galago), this protein is Hemoglobin subunit alpha-B (HBAB).